Consider the following 395-residue polypeptide: MKSLCLLAIVAVVSAEVYFKEEFNDASWEKRWVQSKHKDDFGAFKLSAGKFFDVESRDQGIQTSQDAKFYSRAAKFDKDFSNKGKTLVIQYTVKHEQGIDCGGGYVKVMRADADLGDFHGETPYNVMFGPDICGPTRRVHVILNYKGENKLIKKEITCKSDELTHLYTLILNSDNTYEVKIDGESAQTGSLEEDWDLLPAKKIKDPDAKKPEDWDEREYIDDAEDAKPEDWEKPEHIPDPDAKKPEDWDDEMDGEWEPPMIDNPEYKGEWKPKQIKNPAYKGKWIHPEIENPEYTPDDELYSYESWGAIGFDLWQVKSGTIFDNIIITDSVEEAEAHAAETFDKLKTVEKEKKEKADEETRKAEEEARKKAEEEKEAKKDDDEEEKEEEEGHDEL.

The N-terminal stretch at Met1–Ala15 is a signal peptide. Cys101 and Cys133 are disulfide-bonded. Residues Tyr105, Lys107, Tyr124, and Asp131 each contribute to the an alpha-D-glucoside site. 7 consecutive repeat copies span residues Ala186–Leu197, Asp205–Glu216, Asp222–Lys233, Asp239–Asp250, Gly254–Pro264, Gly268–Pro278, and Gly282–Pro292. The tract at residues Ala186–Asp250 is 4 X approximate repeats. The tract at residues Glu193–Tyr301 is P-domain. Over residues Lys202–Glu212 the composition is skewed to basic and acidic residues. The segment at Lys202 to Glu255 is disordered. Residues Asp213–Glu224 show a composition bias toward acidic residues. The segment covering Asp225–Glu246 has biased composition (basic and acidic residues). The tract at residues Gly254–Pro292 is 3 X approximate repeats. Residues Ser302–Leu395 form a C-domain region. Asp312 contributes to the an alpha-D-glucoside binding site. Basic and acidic residues predominate over residues Glu340–Asp380. The disordered stretch occupies residues Glu340 to Leu395. A compositionally biased stretch (acidic residues) spans Asp381–Leu395. The Prevents secretion from ER motif lies at His392–Leu395.

The protein belongs to the calreticulin family. Cleaved by caspase ced-3 in vitro.

It is found in the endoplasmic reticulum lumen. In terms of biological role, molecular calcium-binding chaperone promoting folding, oligomeric assembly and quality control in the endoplasmic reticulum (ER) via the calreticulin/calnexin cycle. This lectin may interact transiently with almost all of the monoglucosylated glycoproteins that are synthesized in the ER. Probably by controlling the folding of extracellular matrix protein unc-52/Perlecan, may play a role in the formation of fibrous organelles, a hemidesmosome-like structure attaching muscles to the epidermis. Protects dopaminergic neurons against oxidative stress-induced neurodegeneration. May play a role in protection against ER stress. Plays a role in modulating lifespan, acting by influencing ER calcium homeostasis. The sequence is that of Calreticulin (crt-1) from Caenorhabditis elegans.